The chain runs to 802 residues: ATP-dependent zinc metalloprotease FTSH 7, chloroplastic (802 aa).

The transit peptide at 1-55 directs the protein to the chloroplast; that stretch reads MTTTFEFLQPRIHGFATCCSSNSLLYSKASRFFNDRCRVYRQNPNRFVSNSITLP. The interval 87–117 is disordered; sequence CQEDDQNESSSEEEESSQSTPAKSERKREKK. Over residues 88–102 the composition is skewed to acidic residues; it reads QEDDQNESSSEEEES. The next 2 helical transmembrane spans lie at 134-154 and 268-288; these read IIQA…MFVM and GGFF…AGLI. 365–372 is a binding site for ATP; it reads GLPGTGKT. His-590 contacts Zn(2+). Glu-591 is a catalytic residue. Zn(2+) contacts are provided by His-594 and Asp-673.

In the N-terminal section; belongs to the AAA ATPase family. The protein in the C-terminal section; belongs to the peptidase M41 family. The cofactor is Zn(2+).

It is found in the plastid. The protein resides in the chloroplast thylakoid membrane. In terms of biological role, probable ATP-dependent zinc metallopeptidase. This Arabidopsis thaliana (Mouse-ear cress) protein is ATP-dependent zinc metalloprotease FTSH 7, chloroplastic (FTSH7).